The chain runs to 365 residues: S-adenosylmethionine decarboxylase proenzyme (365 aa).

Residues Glu31 and Glu34 contribute to the active site. Ser87 functions as the Schiff-base intermediate with substrate; via pyruvic acid in the catalytic mechanism. Ser87 carries the post-translational modification Pyruvic acid (Ser); by autocatalysis. The Proton donor; for catalytic activity role is filled by Cys101. Active-site proton acceptor; for processing activity residues include Ser248 and His263.

This sequence belongs to the eukaryotic AdoMetDC family. Heterotetramer of two alpha and two beta chains. Pyruvate serves as cofactor. Is synthesized initially as an inactive proenzyme. Formation of the active enzyme involves a self-maturation process in which the active site pyruvoyl group is generated from an internal serine residue via an autocatalytic post-translational modification. Two non-identical subunits are generated from the proenzyme in this reaction, and the pyruvate is formed at the N-terminus of the alpha chain, which is derived from the carboxyl end of the proenzyme. The post-translation cleavage follows an unusual pathway, termed non-hydrolytic serinolysis, in which the side chain hydroxyl group of the serine supplies its oxygen atom to form the C-terminus of the beta chain, while the remainder of the serine residue undergoes an oxidative deamination to produce ammonia and the pyruvoyl group blocking the N-terminus of the alpha chain.

It carries out the reaction S-adenosyl-L-methionine + H(+) = S-adenosyl 3-(methylsulfanyl)propylamine + CO2. The protein operates within amine and polyamine biosynthesis; S-adenosylmethioninamine biosynthesis; S-adenosylmethioninamine from S-adenosyl-L-methionine: step 1/1. The chain is S-adenosylmethionine decarboxylase proenzyme (smd-1) from Onchocerca volvulus.